The following is a 379-amino-acid chain: Lipid-A-disaccharide synthase (379 aa).

It belongs to the LpxB family.

The enzyme catalyses a lipid X + a UDP-2-N,3-O-bis[(3R)-3-hydroxyacyl]-alpha-D-glucosamine = a lipid A disaccharide + UDP + H(+). Its pathway is bacterial outer membrane biogenesis; LPS lipid A biosynthesis. In terms of biological role, condensation of UDP-2,3-diacylglucosamine and 2,3-diacylglucosamine-1-phosphate to form lipid A disaccharide, a precursor of lipid A, a phosphorylated glycolipid that anchors the lipopolysaccharide to the outer membrane of the cell. The polypeptide is Lipid-A-disaccharide synthase (Vibrio campbellii (strain ATCC BAA-1116)).